The sequence spans 141 residues: Large ribosomal subunit protein uL11 (141 aa).

The protein belongs to the universal ribosomal protein uL11 family. As to quaternary structure, part of the ribosomal stalk of the 50S ribosomal subunit. Interacts with L10 and the large rRNA to form the base of the stalk. L10 forms an elongated spine to which L12 dimers bind in a sequential fashion forming a multimeric L10(L12)X complex. In terms of processing, one or more lysine residues are methylated.

Functionally, forms part of the ribosomal stalk which helps the ribosome interact with GTP-bound translation factors. This is Large ribosomal subunit protein uL11 from Chlorobium luteolum (strain DSM 273 / BCRC 81028 / 2530) (Pelodictyon luteolum).